A 1623-amino-acid chain; its full sequence is Histone-lysine N-methyltransferase set-9 (1623 aa).

Disordered regions lie at residues 1–102 (MADG…APQQ), 112–131 (AADARPLTEQEQLAAERPTE), 198–227 (EDAVGPGSPGTQYRRNQQAGGGLPSTSVAS), 448–600 (QRPG…VLRP), and 645–781 (TGQS…DEAA). Over residues 62 to 71 (HQMENQEFYH) the composition is skewed to basic and acidic residues. Residues 77–100 (EPQQIPQIPVFQPAAYNPPNYVAP) are compositionally biased toward low complexity. Residues 206–227 (PGTQYRRNQQAGGGLPSTSVAS) are compositionally biased toward polar residues. Residues 554 to 573 (MTQEEKNAHFARLTTDKEKP) show a composition bias toward basic and acidic residues. Pro residues predominate over residues 587-597 (PHVPPPPPPLV). The span at 645 to 669 (TGQSGSSAAARQRTVSGSAARAQTY) shows a compositional bias: polar residues. The span at 723–733 (HRPRGRPKGTR) shows a compositional bias: basic residues. Over residues 772–781 (SESEGIDEAA) the composition is skewed to acidic residues. Residues 786–834 (TMRCHCGMDHGDGDTIECEGCKTWQHMACMGLTLKSNTSKYKCEMCLPR) form a PHD-type zinc finger. A disordered region spans residues 857–895 (AARKQKRKSEPVEQKQKSSQPSTSRKSAPMALQQPAEPR). The span at 873 to 882 (KSSQPSTSRK) shows a compositional bias: polar residues. The SET domain occupies 965 to 1056 (MSSEVKRQPG…RNTEVTLPFD (92 aa)). Basic and acidic residues-rich tracts occupy residues 1089–1157 (AERH…KKME) and 1172–1194 (AREERRIQQAEEMFRRQEEEGKR). Disordered regions lie at residues 1089–1318 (AERH…NVAP) and 1356–1623 (LLAG…TRWN). Residues 1093–1201 (RAMDHKKQEA…GKRKEARRRS (109 aa)) adopt a coiled-coil conformation. A compositionally biased stretch (polar residues) spans 1242–1252 (TTQPSTSSFAT). A compositionally biased stretch (low complexity) spans 1282 to 1293 (ATTVATPKATTA). Positions 1364 to 1401 (FSEVRAQIEEENRMKERSRKREAKKKAVEKEKKEHRKE) form a coiled coil. Basic and acidic residues-rich tracts occupy residues 1365-1378 (SEVRAQIEEENRMK), 1388-1406 (KKAVEKEKKEHRKEPKKTN), 1413-1429 (KSEKAVEKAVEKVEKKP), and 1447-1464 (KKTEEVDGIEREASESSS). Positions 1533-1544 (SSSNTAPTTTIA) are enriched in polar residues.

The protein belongs to the class V-like SAM-binding methyltransferase superfamily. In terms of tissue distribution, predominantly expressed in the germline (at protein level).

The protein localises to the nucleus. The enzyme catalyses L-lysyl-[histone] + S-adenosyl-L-methionine = N(6)-methyl-L-lysyl-[histone] + S-adenosyl-L-homocysteine + H(+). Functionally, histone methyltransferase. Might play a role in transcriptional regulation. Together with set-26, negatively regulates lifespan in a germline-independent, partially daf-16-dependent fashion. Together with set-26, plays a role in germline development and maintenance and might play a role in the restriction of the trimethylation mark on histone H3 'Lys-4'(H3K4me3) to target genes specifically in the germline. In Caenorhabditis elegans, this protein is Histone-lysine N-methyltransferase set-9.